We begin with the raw amino-acid sequence, 449 residues long: Type 3 secretion system ATPase (449 aa).

ATP is bound at residue 178–183; sequence GCGKTT.

The protein belongs to the ATPase alpha/beta chains family. T3SS ATPase subfamily. In terms of assembly, the core secretion machinery of the T3SS is composed of approximately 20 different proteins, including cytoplasmic components, a base, an export apparatus and a needle. This subunit is part of the cytosolic complex. Forms homododecamers.

Its subcellular location is the cytoplasm. The catalysed reaction is ATP + H2O + cellular proteinSide 1 = ADP + phosphate + cellular proteinSide 2.. Functionally, ATPase component of the type III secretion system (T3SS), also called injectisome, which is used to inject bacterial effector proteins into eukaryotic host cells. Acts as a molecular motor to provide the energy that is required for the export of proteins. Required for type III secretion apparatus (T3SA) formation, proper protein secretion, host cell invasion and virulence. May play a critical role in T3SS substrate recognition, disassembly of the effector/chaperone complex and unfolding of the effector in an ATP-dependent manner prior to secretion. The polypeptide is Type 3 secretion system ATPase (Pseudomonas syringae pv. syringae).